Reading from the N-terminus, the 265-residue chain is Esterase claE (265 aa).

Residues Ser121, Asp211, and His239 each act as charge relay system in the active site.

The protein belongs to the LovG family.

Its pathway is secondary metabolite biosynthesis. In terms of biological role, esterase; part of the cla gene cluster that produces clavatol and ortho-quinone methide. The clavatol biosynthesis cluster cla and the terrestric acid cluster tra are both involved in the production of peniphenones and penilactones. The non-reducing PKS claF is responsible for the formation of clavatol from successive condensations of 3 malonyl-CoA units, presumably with a simple acetyl-CoA starter unit, and 2 methylation steps. The esterase claE probably collaborates with claF by catalyzing the hydrolysis of ACP-bound acyl intermediates to free the ACP from stalled intermediates. The clavatol oxidase claD then converts clavatol to hydroxyclavatol. Spontaneous dehydration of hydroxyclavatol leads to the accumulation of the highly active ortho-quinone methide. On the other hand, the PKS-NRPS hybrid traA is involved in the formation of crustosic acid, with the help of traB and traD. The polyketide synthase module (PKS) of traA is responsible for the synthesis of the polyketide backbone via the condensation of an acetyl-CoA starter unit with 3 malonyl-CoA units. The downstream nonribosomal peptide synthetase (NRPS) module then amidates the carboxyl end of the polyketide with L-malic acid. Because traA lacks a designated enoylreductase (ER) domain, the required activity is provided the enoyl reductase traG. Crustosic acid undergoes decarboxylation and isomerization to the terrestric acid, catalyzed by the 2-oxoglutarate-dependent dioxygenase traH. Both acids are further converted to the 2 gamma-butyrolactones (R)-5-methyltetronic acid and (S)-5-carboxylmethyltetronic acid, with involvement of the cytochrome P450 monooxygenase claJ. Spontaneous addition of the methide to these gamma-butyrolactones leads to peniphenone D and penilactone D, which undergo again stereospecific attacking by methide to give penilactones A and B. The chain is Esterase claE from Penicillium crustosum (Blue mold fungus).